The sequence spans 348 residues: Hereditary hemochromatosis protein homolog (348 aa).

A signal peptide spans 1–22 (MGPRARPALFFLILLRTVAAQG). Residues 23–114 (RPPRSHSLRY…IMDNHNHSKE (92 aa)) form an alpha-1 region. At 23–306 (RPPRSHSLRY…WEPSLSNTLV (284 aa)) the chain is on the extracellular side. Asn-110, Asn-130, and Asn-234 each carry an N-linked (GlcNAc...) asparagine glycan. The interval 115-205 (SHTLQVILGC…ELGRGVLDQQ (91 aa)) is alpha-2. 2 disulfide bridges follow: Cys-124–Cys-187 and Cys-225–Cys-282. Residues 206–297 (VPPLVKVTHH…GLDQPLTATW (92 aa)) form an alpha-3 region. The region spanning 207–296 (PPLVKVTHHV…PGLDQPLTAT (90 aa)) is the Ig-like C1-type domain. The segment at 298-306 (EPSLSNTLV) is connecting peptide. The chain crosses the membrane as a helical span at residues 307-330 (TGVISGIAVCVIIFLIGILFRILR). The Cytoplasmic segment spans residues 331 to 348 (KRQASRGAMGDYVLAECE).

It belongs to the MHC class I family. As to quaternary structure, binds TFR through the extracellular domain in a pH-dependent manner.

The protein localises to the cell membrane. Binds to transferrin receptor (TFR) and reduces its affinity for iron-loaded transferrin. This chain is Hereditary hemochromatosis protein homolog (HFE), found in Rhinoceros unicornis (Greater Indian rhinoceros).